The primary structure comprises 154 residues: Ascorbate-specific PTS system EIIA component (154 aa).

One can recognise a PTS EIIA type-2 domain in the interval 6 to 150; it reads SLAVNKSIRL…QEVLDLIDRT (145 aa). Residue His-68 is the Tele-phosphohistidine intermediate of the active site. The residue at position 68 (His-68) is a Phosphohistidine.

It localises to the cytoplasm. In terms of biological role, the phosphoenolpyruvate-dependent sugar phosphotransferase system (sugar PTS), a major carbohydrate active transport system, catalyzes the phosphorylation of incoming sugar substrates concomitantly with their translocation across the cell membrane. The enzyme II UlaABC PTS system is involved in ascorbate transport. The sequence is that of Ascorbate-specific PTS system EIIA component (ulaC) from Shigella dysenteriae serotype 1 (strain Sd197).